The following is a 506-amino-acid chain: Maturase K (506 aa).

The protein belongs to the intron maturase 2 family. MatK subfamily.

The protein localises to the plastid. It is found in the chloroplast. Usually encoded in the trnK tRNA gene intron. Probably assists in splicing its own and other chloroplast group II introns. The sequence is that of Maturase K from Medicago sativa (Alfalfa).